We begin with the raw amino-acid sequence, 224 residues long: Charged multivesicular body protein 4c (224 aa).

Disordered regions lie at residues 1-21 (MSVF…PTPQ) and 182-224 (SGPE…AWAM). Residues 7–17 (LFGGGGKGGKG) show a composition bias toward gly residues. Residues 21–221 (QEAIQKLRET…DEDDMEELKA (201 aa)) adopt a coiled-coil conformation.

The protein belongs to the SNF7 family. As to quaternary structure, probable core component of the endosomal sorting required for transport complex III (ESCRT-III). ESCRT-III components are thought to multimerize to form a flat lattice on the perimeter membrane of the endosome.

It is found in the cytoplasm. The protein resides in the cytosol. Its subcellular location is the late endosome membrane. Probable core component of the endosomal sorting required for transport complex III (ESCRT-III) which is involved in multivesicular bodies (MVBs) formation and sorting of endosomal cargo proteins into MVBs. MVBs contain intraluminal vesicles (ILVs) that are generated by invagination and scission from the limiting membrane of the endosome and mostly are delivered to lysosomes enabling degradation of membrane proteins, such as stimulated growth factor receptors, lysosomal enzymes and lipids. Key component of the cytokinesis checkpoint, a process required to delay abscission to prevent both premature resolution of intercellular chromosome bridges and accumulation of DNA damage. The sequence is that of Charged multivesicular body protein 4c (chmp4c) from Danio rerio (Zebrafish).